Here is a 396-residue protein sequence, read N- to C-terminus: NASP-related protein sim3 (396 aa).

Residues Met1–Ala31 form a disordered region. TPR repeat units follow at residues Ile32 to Ile65 and Ile89 to Thr122. Residues Asn135–Glu164 are disordered. Residues His143 to Asn154 are compositionally biased toward basic and acidic residues. The TPR 3 repeat unit spans residues Ala199–Val232. Residues Cys267–Ala329 adopt a coiled-coil conformation. The span at Arg284–Glu301 shows a compositional bias: basic and acidic residues. Disordered regions lie at residues Arg284–Asp307 and Glu334–Asp396. A compositionally biased stretch (low complexity) spans Ser343–Leu353.

It belongs to the NASP family. In terms of assembly, interacts with cnp1, hht1, hht2 and hht3; has a preference for CENP-A (cnp1) over histone H3 (hht1/2/3).

It is found in the nucleus. Its function is as follows. Histone H3 and H3-like CENP-A-specific chaperone. Promotes delivery and incorporation of CENP-A in centromeric chromatin, probably by escorting nascent CENP-A to CENP-A chromatin assembly factors. Required for central core silencing and normal chromosome segregation. This chain is NASP-related protein sim3 (sim3), found in Schizosaccharomyces pombe (strain 972 / ATCC 24843) (Fission yeast).